The sequence spans 121 residues: MNFSTVFQAIIAVLGLTTVTALAEFDFDVGYEEFVRTNPDTIFLESDIGLHVGYTEGGERQIATIPHNSTLGTSLREYSGCGGNGTETSIATPAPTMSEVPIATFVKRRKSVPILLPQVCM.

The signal sequence occupies residues 1 to 23 (MNFSTVFQAIIAVLGLTTVTALA). 2 N-linked (GlcNAc...) asparagine glycosylation sites follow: Asn68 and Asn84.

N-glycosylated.

This is an uncharacterized protein from Saccharomyces cerevisiae (strain ATCC 204508 / S288c) (Baker's yeast).